The following is a 297-amino-acid chain: B-lymphocyte antigen CD20 (297 aa).

Residues methionine 1 to threonine 51 lie on the Cytoplasmic side of the membrane. Serine 36 is subject to Phosphoserine. Residues leucine 52–isoleucine 72 form a helical membrane-spanning segment. At histidine 73 to aspartate 75 the chain is on the extracellular side. The helical transmembrane segment at valine 76–isoleucine 96 threads the bilayer. The Cytoplasmic segment spans residues serine 97–leucine 122. The helical transmembrane segment at serine 123–isoleucine 143 threads the bilayer. The Extracellular portion of the chain corresponds to serine 144 to serine 188. The chain crosses the membrane as a helical span at residues valine 189–alanine 209. Topologically, residues glycine 210–proline 297 are cytoplasmic. Cysteine 220 is lipidated: S-palmitoyl cysteine. Serine 225 carries the post-translational modification Phosphoserine. The segment at glutamate 274–proline 297 is disordered. Positions glutamate 281–proline 290 are enriched in low complexity.

Belongs to the MS4A family. As to quaternary structure, forms homotetramers. Interacts with the heavy and light chains of cell surface IgM, the antigen-binding components of the BCR. Post-translationally, phosphorylated. Might be functionally regulated by protein kinase(s). Expressed in PBMCs and lymph node from healthy dogs, in B-cells of canine lymphoma, but not in T-cell lymphoma cells and non-T and non-B-cell lymphoma cells.

It is found in the cell membrane. Its function is as follows. B-lymphocyte-specific membrane protein that plays a role in the regulation of cellular calcium influx necessary for the development, differentiation, and activation of B-lymphocytes. Functions as a store-operated calcium (SOC) channel component promoting calcium influx after activation by the B-cell receptor/BCR. This Canis lupus familiaris (Dog) protein is B-lymphocyte antigen CD20 (MS4A1).